A 207-amino-acid chain; its full sequence is Protein LURP1 (207 aa).

It belongs to the LOR family. In terms of tissue distribution, limited to discrete pathogen infection sites in leaves.

In terms of biological role, involved in basal defense against virulent oomycetes. Might be related to the phospholipid scramblase and tubby-like superfamily of membrane tethered transcription factors. This is Protein LURP1 (LURP1) from Arabidopsis thaliana (Mouse-ear cress).